A 228-amino-acid chain; its full sequence is Small ribosomal subunit protein uS10m (228 aa).

The transit peptide at 1–17 directs the protein to the mitochondrion; that stretch reads MKRYMFGTLPRVQPKRC.

This sequence belongs to the universal ribosomal protein uS10 family. Component of the mitochondrial small ribosomal subunit (mt-SSU). Mature yeast 74S mitochondrial ribosomes consist of a small (37S) and a large (54S) subunit. The 37S small subunit contains a 15S ribosomal RNA (15S mt-rRNA) and at least 32 different proteins. The 54S large subunit contains a 21S rRNA (21S mt-rRNA) and at least 45 different proteins.

Its subcellular location is the mitochondrion. In terms of biological role, component of the mitochondrial ribosome (mitoribosome), a dedicated translation machinery responsible for the synthesis of mitochondrial genome-encoded proteins, including at least some of the essential transmembrane subunits of the mitochondrial respiratory chain. The mitoribosomes are attached to the mitochondrial inner membrane and translation products are cotranslationally integrated into the membrane. This Schizosaccharomyces pombe (strain 972 / ATCC 24843) (Fission yeast) protein is Small ribosomal subunit protein uS10m (rsm10).